We begin with the raw amino-acid sequence, 92 residues long: Small ribosomal subunit protein uS19c (92 aa).

Belongs to the universal ribosomal protein uS19 family.

The protein localises to the plastid. It localises to the chloroplast. In terms of biological role, protein S19 forms a complex with S13 that binds strongly to the 16S ribosomal RNA. This chain is Small ribosomal subunit protein uS19c, found in Physcomitrium patens (Spreading-leaved earth moss).